We begin with the raw amino-acid sequence, 401 residues long: Tryptophan synthase beta chain (401 aa).

Lys92 carries the post-translational modification N6-(pyridoxal phosphate)lysine.

Belongs to the TrpB family. As to quaternary structure, tetramer of two alpha and two beta chains. Requires pyridoxal 5'-phosphate as cofactor.

The catalysed reaction is (1S,2R)-1-C-(indol-3-yl)glycerol 3-phosphate + L-serine = D-glyceraldehyde 3-phosphate + L-tryptophan + H2O. It participates in amino-acid biosynthesis; L-tryptophan biosynthesis; L-tryptophan from chorismate: step 5/5. Functionally, the beta subunit is responsible for the synthesis of L-tryptophan from indole and L-serine. This Vesicomyosocius okutanii subsp. Calyptogena okutanii (strain HA) protein is Tryptophan synthase beta chain.